Consider the following 404-residue polypeptide: 26S proteasome regulatory subunit 6A-B (404 aa).

An ATP-binding site is contributed by 192–199; it reads GPPGTGKT.

Belongs to the AAA ATPase family. As to quaternary structure, may form a heterodimer with a related family member.

It is found in the cytoplasm. The protein localises to the nucleus. Its function is as follows. The 26S proteasome is involved in the ATP-dependent degradation of ubiquitinated proteins. The regulatory (or ATPase) complex confers ATP dependency and substrate specificity to the 26S complex. In Xenopus laevis (African clawed frog), this protein is 26S proteasome regulatory subunit 6A-B (psmc3-b).